A 295-amino-acid chain; its full sequence is Iron-sulfur cluster carrier protein (295 aa).

ATP is bound at residue 38 to 45 (GKGGVGKS).

Belongs to the Mrp/NBP35 ATP-binding proteins family. As to quaternary structure, homodimer.

Functionally, binds and transfers iron-sulfur (Fe-S) clusters to target apoproteins. Can hydrolyze ATP. The polypeptide is Iron-sulfur cluster carrier protein (Pyrococcus furiosus (strain ATCC 43587 / DSM 3638 / JCM 8422 / Vc1)).